Reading from the N-terminus, the 212-residue chain is Kynurenine formamidase (212 aa).

Substrate is bound at residue Trp18. Residues His48, His52, and Asp54 each contribute to the Zn(2+) site. His58 serves as the catalytic Proton donor/acceptor. His160 and Glu172 together coordinate Zn(2+).

Belongs to the Cyclase 1 superfamily. KynB family. In terms of assembly, homodimer. It depends on Zn(2+) as a cofactor.

The enzyme catalyses N-formyl-L-kynurenine + H2O = L-kynurenine + formate + H(+). The protein operates within amino-acid degradation; L-tryptophan degradation via kynurenine pathway; L-kynurenine from L-tryptophan: step 2/2. Its function is as follows. Catalyzes the hydrolysis of N-formyl-L-kynurenine to L-kynurenine, the second step in the kynurenine pathway of tryptophan degradation. The protein is Kynurenine formamidase of Paraburkholderia xenovorans (strain LB400).